A 189-amino-acid polypeptide reads, in one-letter code: Isopentenyl-diphosphate Delta-isomerase (189 aa).

2 residues coordinate Mn(2+): histidine 27 and histidine 34. The Nudix hydrolase domain occupies 32 to 171 (PLHFAFSTYI…PFVFSPWLVD (140 aa)). The active site involves cysteine 69. Position 69 (cysteine 69) interacts with Mg(2+). Histidine 71 is a binding site for Mn(2+). Residue glutamate 89 participates in Mg(2+) binding. Glutamate 119 and glutamate 121 together coordinate Mn(2+). The active site involves glutamate 121.

This sequence belongs to the IPP isomerase type 1 family. Requires Mg(2+) as cofactor. It depends on Mn(2+) as a cofactor.

It is found in the cytoplasm. The enzyme catalyses isopentenyl diphosphate = dimethylallyl diphosphate. It functions in the pathway isoprenoid biosynthesis; dimethylallyl diphosphate biosynthesis; dimethylallyl diphosphate from isopentenyl diphosphate: step 1/1. Functionally, catalyzes the 1,3-allylic rearrangement of the homoallylic substrate isopentenyl (IPP) to its highly electrophilic allylic isomer, dimethylallyl diphosphate (DMAPP). This is Isopentenyl-diphosphate Delta-isomerase from Corynebacterium glutamicum (strain ATCC 13032 / DSM 20300 / JCM 1318 / BCRC 11384 / CCUG 27702 / LMG 3730 / NBRC 12168 / NCIMB 10025 / NRRL B-2784 / 534).